Reading from the N-terminus, the 399-residue chain is Glutamine synthetase 1, mitochondrial (399 aa).

A mitochondrion-targeting transit peptide spans 1–27; it reads MALRVAGLFLKKELVAPATQQLRLLRT. The 82-residue stretch at 62 to 143 folds into the GS beta-grasp domain; it reads VQATYLWIDG…VLCDTYSADG (82 aa). The region spanning 150 to 399 is the GS catalytic domain; the sequence is KRAAFQAAID…AIVRTCLLNE (250 aa).

This sequence belongs to the glutamine synthetase family. Homooctamer.

It localises to the mitochondrion. The catalysed reaction is L-glutamate + NH4(+) + ATP = L-glutamine + ADP + phosphate + H(+). The protein is Glutamine synthetase 1, mitochondrial (Gs1) of Drosophila melanogaster (Fruit fly).